Consider the following 829-residue polypeptide: Potassium voltage-gated channel unc-103 (829 aa).

A disordered region spans residues 1–76; that stretch reads MKTAVFGRDS…PRASHSSRRT (76 aa). At 1–123 the chain is on the cytoplasmic side; sequence MKTAVFGRDS…YSPFKAVWDW (123 aa). Over residues 46–66 the composition is skewed to gly residues; it reads GVSGTGGGGSGGLQGAPGAGG. The chain crosses the membrane as a helical span at residues 124–144; sequence IILLLVIYTAVFTPYVAAFLL. The Extracellular segment spans residues 145–158; that stretch reads RELQDTAKKSRFTE. The helical transmembrane segment at 159–179 threads the bilayer; the sequence is PLEIVDLIVDIMFIVDIIINF. The Cytoplasmic portion of the chain corresponds to 180–203; that stretch reads RTTYVNENDEACQVVSDPGKIATH. The chain crosses the membrane as a helical span at residues 204 to 224; the sequence is YFKGWFIIDMVAAVPFDLLLV. Residues 225 to 234 are Extracellular-facing; it reads STNSDETTTL. The helical; Voltage-sensor transmembrane segment at 235–255 threads the bilayer; the sequence is IGLLKTARLLRLVRVARKLDR. Over 256–261 the chain is Cytoplasmic; sequence YSEYGA. The helical transmembrane segment at 262 to 282 threads the bilayer; the sequence is AVLLLLMATFALIAHWLACIW. Topologically, residues 283-327 are extracellular; that stretch reads YAIGSAELSHKEYTWLHQLSKQLAQPYTSTNGTIPTGGPTLKSRY. A glycan (N-linked (GlcNAc...) asparagine) is linked at asparagine 313. The pore-forming intramembrane region spans 328–348; it reads VTSLYFTLSTITSIGFGNVSA. Residues 349 to 354 are Extracellular-facing; that stretch reads TTDSEK. Residues 355 to 375 form a helical membrane-spanning segment; that stretch reads IFTIIMMILGSLMYASVFGNV. The Cytoplasmic segment spans residues 376-829; sequence SAIIQRLYSG…TPTQETDTIL (454 aa). 458–559 serves as a coordination point for a nucleoside 3',5'-cyclic phosphate; sequence AFAGSTPGCL…ILRDDLLDVL (102 aa). A disordered region spans residues 601 to 674; sequence SMNKDRYTTP…PLLRRSTNHH (74 aa). Basic and acidic residues predominate over residues 603 to 615; sequence NKDRYTTPPDGDH. Residues 640 to 650 are compositionally biased toward low complexity; it reads SAGSRSSSRCS.

Belongs to the potassium channel family. H (Eag) (TC 1.A.1.20) subfamily. Kv11.1/KCNH2 sub-subfamily. As to quaternary structure, the potassium channel is composed of a homo- or heterotetrameric complex. Interacts with dnj-1; dnj-1 chaperone promotes tetramerization.

The protein resides in the cell membrane. Its function is as follows. Pore-forming (alpha) subunit of voltage-gated inwardly rectifying potassium channel. Channel properties are modulated by cAMP and subunit assembly. Regulates the movements of the male's copulatory spicules before and during male mating behavior. The protein is Potassium voltage-gated channel unc-103 of Caenorhabditis elegans.